The sequence spans 722 residues: Zinc finger BED domain-containing protein RICESLEEPER 1 (722 aa).

A BED-type zinc finger spans residues 66–126 (RKKSLVWEHF…GSCPKIKNQE (61 aa)). Zn(2+)-binding residues include C89, C92, H113, and C119. The tract at residues 572–592 (VEQGGGNNAPASENSTQATAP) is disordered. Residues 580 to 592 (APASENSTQATAP) show a composition bias toward polar residues. The interval 617-702 (ELEQYLDESL…EALVCAKDWL (86 aa)) is HATC (Hobo-Ac-Tam3) domain.

As to quaternary structure, homodimer.

The protein localises to the nucleus. Functionally, transposase-like protein that is essential for plant growth and development. May regulate global gene expression by recruiting other cellular factors. The sequence is that of Zinc finger BED domain-containing protein RICESLEEPER 1 from Oryza sativa subsp. japonica (Rice).